A 650-amino-acid polypeptide reads, in one-letter code: Pentatricopeptide repeat-containing protein At2g41080 (650 aa).

PPR repeat units follow at residues 43–77, 78–112, 114–139, 140–174, 175–209, 210–240, 241–275, 276–310, 311–341, 342–372, 378–413, and 414–444; these read NTSL…GFSS, DKFI…NYMS, NILI…MPDR, KLTT…GFSP, DEYT…GLEL, DLVV…MPVR, NLVA…GCRP, NKIT…GASS, VVAV…REDE, DEVM…MAEQ, NEVA…GFKP, and GLKH…MPIK. The type E motif stretch occupies residues 449–524; the sequence is IWKTLLSACN…EAGISWFEHK (76 aa). A type E(+) motif region spans residues 525-555; the sequence is GEVHQFKMGDRSQSKSKEIYSYLKELTLEMK. The segment at 556 to 650 is type DYW motif; the sequence is LKGYKPDTAS…NGKCSCGDYW (95 aa).

The protein belongs to the PPR family. PCMP-H subfamily.

The protein is Pentatricopeptide repeat-containing protein At2g41080 (PCMP-H29) of Arabidopsis thaliana (Mouse-ear cress).